The primary structure comprises 97 residues: Co-chaperonin GroES (97 aa).

This sequence belongs to the GroES chaperonin family. As to quaternary structure, heptamer of 7 subunits arranged in a ring. Interacts with the chaperonin GroEL.

It is found in the cytoplasm. Its function is as follows. Together with the chaperonin GroEL, plays an essential role in assisting protein folding. The GroEL-GroES system forms a nano-cage that allows encapsulation of the non-native substrate proteins and provides a physical environment optimized to promote and accelerate protein folding. GroES binds to the apical surface of the GroEL ring, thereby capping the opening of the GroEL channel. The polypeptide is Co-chaperonin GroES (Sodalis glossinidius (strain morsitans)).